Reading from the N-terminus, the 626-residue chain is tRNA 5-methylaminomethyl-2-thiouridine biosynthesis bifunctional protein MnmC (626 aa).

The tRNA (mnm(5)s(2)U34)-methyltransferase stretch occupies residues 1–237; that stretch reads MKGPQLDYAD…KRDMTVGVFQ (237 aa). The interval 255–626 is FAD-dependent cmnm(5)s(2)U34 oxidoreductase; that stretch reads IGSGLSGANV…RVLPNRFSQE (372 aa).

It in the N-terminal section; belongs to the methyltransferase superfamily. tRNA (mnm(5)s(2)U34)-methyltransferase family. In the C-terminal section; belongs to the DAO family. FAD is required as a cofactor.

It localises to the cytoplasm. The enzyme catalyses 5-aminomethyl-2-thiouridine(34) in tRNA + S-adenosyl-L-methionine = 5-methylaminomethyl-2-thiouridine(34) in tRNA + S-adenosyl-L-homocysteine + H(+). In terms of biological role, catalyzes the last two steps in the biosynthesis of 5-methylaminomethyl-2-thiouridine (mnm(5)s(2)U) at the wobble position (U34) in tRNA. Catalyzes the FAD-dependent demodification of cmnm(5)s(2)U34 to nm(5)s(2)U34, followed by the transfer of a methyl group from S-adenosyl-L-methionine to nm(5)s(2)U34, to form mnm(5)s(2)U34. The polypeptide is tRNA 5-methylaminomethyl-2-thiouridine biosynthesis bifunctional protein MnmC (Hahella chejuensis (strain KCTC 2396)).